The following is a 404-amino-acid chain: Cysteine desulfurase IscS (404 aa).

Pyridoxal 5'-phosphate is bound by residues 85-86, Asn-165, Gln-193, 213-215, and Thr-251; these read GT and SGH. Cys-338 functions as the Cysteine persulfide intermediate in the catalytic mechanism. Residue Cys-338 coordinates [2Fe-2S] cluster.

Belongs to the class-V pyridoxal-phosphate-dependent aminotransferase family. NifS/IscS subfamily. Homodimer. Forms a heterotetramer with IscU, interacts with other sulfur acceptors. The cofactor is pyridoxal 5'-phosphate.

Its subcellular location is the cytoplasm. It catalyses the reaction (sulfur carrier)-H + L-cysteine = (sulfur carrier)-SH + L-alanine. It functions in the pathway cofactor biosynthesis; iron-sulfur cluster biosynthesis. Functionally, master enzyme that delivers sulfur to a number of partners involved in Fe-S cluster assembly, tRNA modification or cofactor biosynthesis. Catalyzes the removal of elemental sulfur atoms from cysteine to produce alanine. Functions as a sulfur delivery protein for Fe-S cluster synthesis onto IscU, an Fe-S scaffold assembly protein, as well as other S acceptor proteins. In Methanosarcina thermophila, this protein is Cysteine desulfurase IscS.